The following is a 457-amino-acid chain: UPF0210 protein Sfum_2948 (457 aa).

It belongs to the UPF0210 family. Homodimer.

The chain is UPF0210 protein Sfum_2948 from Syntrophobacter fumaroxidans (strain DSM 10017 / MPOB).